We begin with the raw amino-acid sequence, 782 residues long: Cadherin-5 (782 aa).

An N-terminal signal peptide occupies residues 1-22; sequence MQVLVMLLAAAGTYLGLLTAPT. The propeptide occupies 23–44; sequence AASNPGRQDTPSTLPLHRRQKR. Cadherin domains are found at residues 45–148, 149–255, 256–370, 371–475, and 476–592; these read DWIW…WPVF, TQLV…FPVF, TQTR…PPNF, KQPF…DNAP, and EFAK…MGAQ. The Extracellular portion of the chain corresponds to 45-598; that stretch reads DWIWNQMHID…MGAQVGVSIQ (554 aa). Ca(2+)-binding residues include Glu55 and Glu56. The N-linked (GlcNAc...) asparagine glycan is linked to Asn58. Residues Asp106, Glu108, Asp140, Ile141, Asn142, Asp143, and Asn144 each coordinate Ca(2+). A glycan (N-linked (GlcNAc...) asparagine) is linked at Asn154. Residues Asp174, Asp176, His183, and Asp228 each contribute to the Ca(2+) site. Residues Asn360, Asn440, Asn522, and Asn534 are each glycosylated (N-linked (GlcNAc...) asparagine). Residues 599–619 traverse the membrane as a helical segment; that stretch reads ALVAIFLCILTIAVISLLVYL. A required for interaction with PALS1 region spans residues 620-659; sequence RRRLRKQARAHGKSVPEIHEQLVTYDEEGGGEMDTTSYDV. Over 620 to 782 the chain is Cytoplasmic; it reads RRRLRKQARA…GSDPREELLY (163 aa).

Part of a complex composed of AMOTL2, MAGI1 and CDH5, within the complex AMOTL2 acts as a scaffold protein for the interaction of MAGI1 with CDH5. The complex is required for coupling actin fibers to cell junctions in endothelial cells. Within the complex AMOTL2 (via its N-terminus) interacts with CDH5. Interacts (via cadherin 5 domain) with PTPRB. Interacts with TRPC4. Interacts with KRIT1. Interacts with PARD3. Interacts with RTN4 (isoform B). Interacts with PALS1; the interaction promotes PALS1 localization to cell junctions and is required for CDH5-mediated vascular lumen formation and endothelial cell. Interacts with CTNND1/p120-catenin; the interaction controls CADH5 endocytosis. Phosphorylated on tyrosine residues by KDR/VEGFR-2. Dephosphorylated by PTPRB. In terms of processing, O-glycosylated.

Its subcellular location is the cell junction. It is found in the adherens junction. The protein resides in the cell membrane. The protein localises to the cytoplasm. In terms of biological role, cadherins are calcium-dependent cell adhesion proteins. They preferentially interact with themselves in a homophilic manner in connecting cells; cadherins may thus contribute to the sorting of heterogeneous cell types. This cadherin may play a important role in endothelial cell biology through control of the cohesion and organization of the intercellular junctions. It associates with alpha-catenin forming a link to the cytoskeleton. Plays a role in coupling actin fibers to cell junctions in endothelial cells, via acting as a cell junctional complex anchor for AMOTL2 and MAGI1. Acts in concert with KRIT1 and PALS1 to establish and maintain correct endothelial cell polarity and vascular lumen. These effects are mediated by recruitment and activation of the Par polarity complex and RAP1B. Required for activation of PRKCZ and for localization of phosphorylated PRKCZ, PARD3, TIAM1 and RAP1B to the cell junction. Associates with CTNND1/p120-catenin to control CADH5 endocytosis. This is Cadherin-5 from Sus scrofa (Pig).